The following is a 99-amino-acid chain: SAGA-associated factor 11 (99 aa).

The SGF11-type zinc finger occupies 71–92 (IHCENCGRDVSANRLAAHLQRC).

Belongs to the SGF11 family. Component of the 1.8 MDa SAGA transcription coactivator-HAT complex. SAGA is built of 5 distinct domains with specialized functions. Within the SAGA complex, SUS1, SGF11, SGF73 and UBP8 form an additional subcomplex of SAGA called the DUB module (deubiquitination module). Interacts directly with SGF73, SUS1 and UBP8.

Its subcellular location is the nucleus. Functions as a component of the transcription regulatory histone acetylation (HAT) complex SAGA. At the promoters, SAGA is required for recruitment of the basal transcription machinery. It influences RNA polymerase II transcriptional activity through different activities such as TBP interaction and promoter selectivity, interaction with transcription activators, and chromatin modification through histone acetylation and deubiquitination. SAGA acetylates nucleosomal histone H3 to some extent (to form H3K9ac, H3K14ac, H3K18ac and H3K23ac). SAGA interacts with DNA via upstream activating sequences (UASs). Involved in transcriptional regulation of a subset of SAGA-regulated genes. Within the SAGA complex, participates in a subcomplex, that specifically deubiquitinates histones H2B. This is SAGA-associated factor 11 from Saccharomyces cerevisiae (strain YJM789) (Baker's yeast).